The primary structure comprises 478 residues: MNRDSFYPAIACFPLLLMLAGCAPMHETRQALSQQTPAAQVDTALPTALKMVGQTXQWWLEYHDNQLTSLINNALQNAPDMQVAEQRIQLAEAQAKAVATQDGPQIDFSADMERQKMSAEGLMGPFALNDPAAGTTGPWYTNGTFGLTAGWHLDIWGKNRAEVTARLGTVKARAAEREQTRQLLAGSVARLYWEWQTQAALNTVLQQIEKEQNTIIATDRQLYQNGITSSVEGVETDINASKTRQQLNDVAGKMKIIEARLSALTNNQTKSLKLKPVALPKVASQLPDELGYSLLARRADLQAAHWYVESSLSTIDAAKAAFYPDINLMAFLQQDALHLSDLFRHSAQQMGVTAGLTLPIFDSGRLNANLDIAKAESNLSIASYNKAVVEAVNDVARAASQVQTLAEKNQHQAQIERDALRVVGLAQARFNAGIIAGSRVSEARIPALRERANGLLLQGQWLDASIQLTGALGGGYKR.

Positions 1-21 are cleaved as a signal peptide; the sequence is MNRDSFYPAIACFPLLLMLAG. C22 is lipidated: N-palmitoyl cysteine. Residue C22 is the site of S-diacylglycerol cysteine attachment.

It belongs to the outer membrane factor (OMF) (TC 1.B.17) family.

It localises to the cell outer membrane. Could be involved in resistance to puromycin, acriflavine and tetraphenylarsonium chloride. The polypeptide is Putative multidrug resistance outer membrane protein MdtQ (mdtQ) (Escherichia coli (strain K12)).